The primary structure comprises 224 residues: uncharacterized protein (224 aa).

This sequence to M.tuberculosis Rv2558.

This is an uncharacterized protein from Mycobacterium tuberculosis (strain CDC 1551 / Oshkosh).